Here is a 155-residue protein sequence, read N- to C-terminus: Molybdopterin synthase catalytic subunit 1 (155 aa).

Residues 101-102 (HR), Lys-117, and 124-126 (KKE) each bind substrate.

The protein belongs to the MoaE family. MOCS2B subfamily. In terms of assembly, heterotetramer; composed of 2 small (MOCS2A) and 2 large (MOCS2B) subunits.

The protein resides in the cytoplasm. The catalysed reaction is 2 [molybdopterin-synthase sulfur-carrier protein]-C-terminal-Gly-aminoethanethioate + cyclic pyranopterin phosphate + H2O = molybdopterin + 2 [molybdopterin-synthase sulfur-carrier protein]-C-terminal Gly-Gly + 2 H(+). Its pathway is cofactor biosynthesis; molybdopterin biosynthesis. In terms of biological role, catalytic subunit of the molybdopterin synthase complex, a complex that catalyzes the conversion of precursor Z into molybdopterin. Acts by mediating the incorporation of 2 sulfur atoms from thiocarboxylated MOCS2A into precursor Z to generate a dithiolene group. The sequence is that of Molybdopterin synthase catalytic subunit 1 from Aedes aegypti (Yellowfever mosquito).